Consider the following 273-residue polypeptide: MSTIRPVFYVSDGTGITAETIGHSLLTQFSGFSFITDRMSFVDDPEKAREACSRIQAAGERYQVRPIVVNSCVDQSLSLILAESGALMLDVFAPFIEPLERELSSSRVNRVGQAHGMVDFDTYHRRINAMNFALTHDDGIAVNYDDADVILVAVSRAGKTPTCIYLALHYGVRAANYPLTDEDLESDRLPPRLRNYRRKLFGLTIDPDRLQQIRQERRPNSRYANLDTCKREVAAAEVMFQMERIPTLSTTHTSIEEISSKVLATLGLQRELY.

Residue 153-160 (AVSRAGKT) participates in ADP binding.

It belongs to the pyruvate, phosphate/water dikinase regulatory protein family. PSRP subfamily.

The enzyme catalyses [pyruvate, water dikinase] + ADP = [pyruvate, water dikinase]-phosphate + AMP + H(+). It catalyses the reaction [pyruvate, water dikinase]-phosphate + phosphate + H(+) = [pyruvate, water dikinase] + diphosphate. Functionally, bifunctional serine/threonine kinase and phosphorylase involved in the regulation of the phosphoenolpyruvate synthase (PEPS) by catalyzing its phosphorylation/dephosphorylation. The chain is Putative phosphoenolpyruvate synthase regulatory protein from Stenotrophomonas maltophilia (strain R551-3).